A 357-amino-acid polypeptide reads, in one-letter code: Protein pelota homolog (357 aa).

The protein belongs to the eukaryotic release factor 1 family. Pelota subfamily. In terms of assembly, monomer. Requires a divalent metal cation as cofactor.

The protein localises to the cytoplasm. Functionally, may function in recognizing stalled ribosomes, interact with stem-loop structures in stalled mRNA molecules, and effect endonucleolytic cleavage of the mRNA. May play a role in the release non-functional ribosomes and degradation of damaged mRNAs. Has endoribonuclease activity. This Halobacterium salinarum (strain ATCC 29341 / DSM 671 / R1) protein is Protein pelota homolog.